We begin with the raw amino-acid sequence, 599 residues long: Bile salt-activated lipase (599 aa).

An N-terminal signal peptide occupies residues 1-20 (MGRLEVLFLGLTCCLAAACA). Cys-84 and Cys-100 are joined by a disulfide. An N-linked (GlcNAc...) asparagine glycan is attached at Asn-207. Ser-214 (acyl-ester intermediate) is an active-site residue. Cys-266 and Cys-277 are oxidised to a cystine. N-linked (GlcNAc...) asparagine glycosylation occurs at Asn-325. Catalysis depends on charge relay system residues Asp-340 and His-455. The disordered stretch occupies residues 553–599 (TGDQDTLTPPEDDSEVAPDPPSDDSQVVPVPPTDDSVEAQMPATIGF). Repeat copies occupy residues 559–569 (LTPPEDDSEVA), 570–580 (PDPPSDDSQVV), and 581–588 (PVPPTDDS). The 4 X 11 AA tandem repeats, O-glycosylated region stretch occupies residues 559-588 (LTPPEDDSEVAPDPPSDDSQVVPVPPTDDS).

This sequence belongs to the type-B carboxylesterase/lipase family. As to quaternary structure, interacts with CLC. EXpressed by eosinophils.

The protein resides in the secreted. It catalyses the reaction a triacylglycerol + H2O = a diacylglycerol + a fatty acid + H(+). It carries out the reaction 1,2,3-tri-(9Z-octadecenoyl)-glycerol + H2O = di-(9Z)-octadecenoylglycerol + (9Z)-octadecenoate + H(+). The enzyme catalyses 1,2,3-trioctanoylglycerol + H2O = dioctanoylglycerol + octanoate + H(+). The catalysed reaction is a sterol ester + H2O = a sterol + a fatty acid + H(+). It catalyses the reaction an acetyl ester + H2O = an aliphatic alcohol + acetate + H(+). It carries out the reaction a butanoate ester + H2O = an aliphatic alcohol + butanoate + H(+). The enzyme catalyses 9-hexadecanoyloxy-octadecanoate + H2O = 9-hydroxy-octadecanoate + hexadecanoate + H(+). The catalysed reaction is 9-(9Z-octadecenoyloxy)-octadecanoate + H2O = 9-hydroxy-octadecanoate + (9Z)-octadecenoate + H(+). It catalyses the reaction cholesteryl (9Z-octadecenoate) + H2O = cholesterol + (9Z)-octadecenoate + H(+). It carries out the reaction 1-hexadecanoyl-sn-glycero-3-phosphocholine + H2O = sn-glycerol 3-phosphocholine + hexadecanoate + H(+). The enzyme catalyses 12-hexadecanoyloxy-octadecanoate + H2O = 12-hydroxyoctadecanoate + hexadecanoate + H(+). The catalysed reaction is 12-(9Z-octadecenoyloxy)-octadecanoate + H2O = 12-hydroxyoctadecanoate + (9Z)-octadecenoate + H(+). It catalyses the reaction 13-(9Z-octadecenoyloxy)-octadecanoate + H2O = 13-hydroxy-octadecanoate + (9Z)-octadecenoate + H(+). It carries out the reaction 9-(9Z-hexadecenoyloxy)-octadecanoate + H2O = (9Z)-hexadecenoate + 9-hydroxy-octadecanoate + H(+). The enzyme catalyses 12-(9Z-hexadecenoyloxy)-octadecanoate + H2O = 12-hydroxyoctadecanoate + (9Z)-hexadecenoate + H(+). The catalysed reaction is 13-(9Z-hexadecenoyloxy)-octadecanoate + H2O = 13-hydroxy-octadecanoate + (9Z)-hexadecenoate + H(+). It catalyses the reaction 12-octadecanoyloxy-octadecanoate + H2O = 12-hydroxyoctadecanoate + octadecanoate + H(+). It carries out the reaction 13-octadecanoyloxy-octadecanoate + H2O = 13-hydroxy-octadecanoate + octadecanoate + H(+). The enzyme catalyses 5-(9Z-hexadecenoyloxy)-octadecanoate + H2O = 5-hydroxy-octadecanoate + (9Z)-hexadecenoate + H(+). The catalysed reaction is 9-octadecanoyloxy-octadecanoate + H2O = 9-hydroxy-octadecanoate + octadecanoate + H(+). Activated by bile salts such as sodium taurocholate. Its function is as follows. Catalyzes the hydrolysis of a wide range of substrates including cholesteryl esters, phospholipids, lysophospholipids, di- and tri-acylglycerols, and fatty acid esters of hydroxy fatty acids (FAHFAs). Preferentially hydrolyzes FAHFAs with the ester bond further away from the carboxylate. Unsaturated FAHFAs are hydrolyzed more quickly than saturated FAHFAs. Has an essential role in the complete digestion of dietary lipids and their intestinal absorption, along with the absorption of fat-soluble vitamins. The sequence is that of Bile salt-activated lipase (Cel) from Mus musculus (Mouse).